A 322-amino-acid chain; its full sequence is Delta-aminolevulinic acid dehydratase (322 aa).

C120, C122, and C130 together coordinate Zn(2+). The active-site Schiff-base intermediate with substrate is the K195. 5-aminolevulinate contacts are provided by R205 and R217. Residue E233 coordinates Mg(2+). The active-site Schiff-base intermediate with substrate is the K248. S274 and Y312 together coordinate 5-aminolevulinate.

Belongs to the ALAD family. As to quaternary structure, homooctamer. Zn(2+) serves as cofactor.

The catalysed reaction is 2 5-aminolevulinate = porphobilinogen + 2 H2O + H(+). It functions in the pathway porphyrin-containing compound metabolism; protoporphyrin-IX biosynthesis; coproporphyrinogen-III from 5-aminolevulinate: step 1/4. Functionally, catalyzes an early step in the biosynthesis of tetrapyrroles. Binds two molecules of 5-aminolevulinate per subunit, each at a distinct site, and catalyzes their condensation to form porphobilinogen. The sequence is that of Delta-aminolevulinic acid dehydratase (hemB) from Archaeoglobus fulgidus (strain ATCC 49558 / DSM 4304 / JCM 9628 / NBRC 100126 / VC-16).